The following is a 214-amino-acid chain: Thymidylate kinase (214 aa).

Residue 10–17 participates in ATP binding; the sequence is GPDGAGKT.

The protein belongs to the thymidylate kinase family.

It catalyses the reaction dTMP + ATP = dTDP + ADP. Phosphorylation of dTMP to form dTDP in both de novo and salvage pathways of dTTP synthesis. This Levilactobacillus brevis (strain ATCC 367 / BCRC 12310 / CIP 105137 / JCM 1170 / LMG 11437 / NCIMB 947 / NCTC 947) (Lactobacillus brevis) protein is Thymidylate kinase.